Reading from the N-terminus, the 427-residue chain is Ribosome biogenesis protein WDR12 homolog (427 aa).

The ubiquitin-like (UBL) domain stretch occupies residues 13 to 97; the sequence is LQLHLYTKQK…EDTVELEYVE (85 aa). WD repeat units lie at residues 109–146, 148–190, 197–236, 260–298, 301–339, 345–385, and 389–427; these read LHDDWVSAVEAKDNWILTGCYDNTLNIWTTKGKHKLTI, GHIA…NSVE, GHERGVDCIAANRSKTRMATGSWDTMLKIWSTDVRNDGDS, GHRECISGVQWIDDNTLVTSSWDHTIKIWDLALSGIKSE, GHKSFFDLSYSHLNGLIIAASPDKNLRLYDPKSNQGTIV, GHTQ…APIF, and GHEDKVLACDWSNPKFILSGGSDNSVRVFKSKIAIGEQK.

It belongs to the WD repeat WDR12/YTM1 family.

It localises to the nucleus. It is found in the nucleolus. The protein localises to the nucleoplasm. Required for maturation of ribosomal RNAs and formation of the large ribosomal subunit. The polypeptide is Ribosome biogenesis protein WDR12 homolog (Aedes aegypti (Yellowfever mosquito)).